A 941-amino-acid chain; its full sequence is Translation initiation factor IF-2 (941 aa).

Disordered stretches follow at residues I61–N204 and Q249–K274. The segment covering E147 to L163 has biased composition (basic and acidic residues). The segment covering N164–S179 has biased composition (low complexity). Residues A180 to N204 are compositionally biased toward basic and acidic residues. The 170-residue stretch at E440–K609 folds into the tr-type G domain. The interval G449 to T456 is G1. Residue G449 to T456 coordinates GTP. Positions G474 to H478 are G2. Residues D495–G498 form a G3 region. Residues D495–H499 and N549–D552 contribute to the GTP site. The G4 stretch occupies residues N549–D552. The G5 stretch occupies residues S585–K587.

This sequence belongs to the TRAFAC class translation factor GTPase superfamily. Classic translation factor GTPase family. IF-2 subfamily.

Its subcellular location is the cytoplasm. Its function is as follows. One of the essential components for the initiation of protein synthesis. Protects formylmethionyl-tRNA from spontaneous hydrolysis and promotes its binding to the 30S ribosomal subunits. Also involved in the hydrolysis of GTP during the formation of the 70S ribosomal complex. This chain is Translation initiation factor IF-2, found in Helicobacter acinonychis (strain Sheeba).